We begin with the raw amino-acid sequence, 366 residues long: Ribosomal RNA large subunit methyltransferase M (366 aa).

Residues Ser188, 221–224, Asp240, Asp260, and Asp277 contribute to the S-adenosyl-L-methionine site; that span reads CPGG. The Proton acceptor role is filled by Lys306.

This sequence belongs to the class I-like SAM-binding methyltransferase superfamily. RNA methyltransferase RlmE family. RlmM subfamily. As to quaternary structure, monomer.

It localises to the cytoplasm. It carries out the reaction cytidine(2498) in 23S rRNA + S-adenosyl-L-methionine = 2'-O-methylcytidine(2498) in 23S rRNA + S-adenosyl-L-homocysteine + H(+). Its function is as follows. Catalyzes the 2'-O-methylation at nucleotide C2498 in 23S rRNA. This Salmonella newport (strain SL254) protein is Ribosomal RNA large subunit methyltransferase M.